The chain runs to 104 residues: Ribonuclease P protein component 4 (104 aa).

The Zn(2+) site is built by C57, C60, C83, and C86.

This sequence belongs to the eukaryotic/archaeal RNase P protein component 4 family. Consists of a catalytic RNA component and at least 4-5 protein subunits. The cofactor is Zn(2+).

It is found in the cytoplasm. The catalysed reaction is Endonucleolytic cleavage of RNA, removing 5'-extranucleotides from tRNA precursor.. Part of ribonuclease P, a protein complex that generates mature tRNA molecules by cleaving their 5'-ends. The chain is Ribonuclease P protein component 4 from Saccharolobus islandicus (strain L.S.2.15 / Lassen #1) (Sulfolobus islandicus).